We begin with the raw amino-acid sequence, 198 residues long: Iron-sulfur flavoprotein MJ0731 (198 aa).

[4Fe-4S] cluster contacts are provided by cysteine 46, cysteine 49, cysteine 52, and cysteine 59.

This sequence belongs to the SsuE family. Isf subfamily. Homodimer. FMN serves as cofactor. The cofactor is [4Fe-4S] cluster.

Functionally, redox-active protein probably involved in electron transport. This Methanocaldococcus jannaschii (strain ATCC 43067 / DSM 2661 / JAL-1 / JCM 10045 / NBRC 100440) (Methanococcus jannaschii) protein is Iron-sulfur flavoprotein MJ0731.